Reading from the N-terminus, the 301-residue chain is MKLNGVFTALATPFRDDLSLDERALASFVDWQISSGISGIVPCGTTGESATLNFEEYCTVVRLCIETARGRILVIAGAGSHCTTETISRALFVQSAGADAALIVVPYYNRPSDEGVYQHFRAVHDATNIPIVLYNVPQRTAIDISNDTIRRIAELPRVVGIKDCTGAERVAALKAILPEKVAILSGEDETALASYMNGGSGCISVVSNVAPKMAVELYRLHALGKINMAKQVSGNLAALSRVLFIEPSPSPTKYALSLMGKMRPKVRLPLVELTSSGQTAVKNVLETLDLLRQQKAMHSQL.

T46 lines the pyruvate pocket. The active-site Proton donor/acceptor is Y134. K162 functions as the Schiff-base intermediate with substrate in the catalytic mechanism. I203 serves as a coordination point for pyruvate.

This sequence belongs to the DapA family. In terms of assembly, homotetramer; dimer of dimers.

Its subcellular location is the cytoplasm. The enzyme catalyses L-aspartate 4-semialdehyde + pyruvate = (2S,4S)-4-hydroxy-2,3,4,5-tetrahydrodipicolinate + H2O + H(+). The protein operates within amino-acid biosynthesis; L-lysine biosynthesis via DAP pathway; (S)-tetrahydrodipicolinate from L-aspartate: step 3/4. Its function is as follows. Catalyzes the condensation of (S)-aspartate-beta-semialdehyde [(S)-ASA] and pyruvate to 4-hydroxy-tetrahydrodipicolinate (HTPA). The sequence is that of 4-hydroxy-tetrahydrodipicolinate synthase from Anaplasma marginale (strain St. Maries).